The primary structure comprises 288 residues: Quinate/shikimate dehydrogenase (288 aa).

Substrate is bound by residues Lys71 and Asp107. NAD(+) is bound by residues 132–135 (AGGA), 155–158 (NRRD), Lys205, 232–235 (CVYN), and Gly255.

Belongs to the shikimate dehydrogenase family. Homodimer.

The catalysed reaction is L-quinate + NAD(+) = 3-dehydroquinate + NADH + H(+). It carries out the reaction L-quinate + NADP(+) = 3-dehydroquinate + NADPH + H(+). The enzyme catalyses shikimate + NADP(+) = 3-dehydroshikimate + NADPH + H(+). It catalyses the reaction shikimate + NAD(+) = 3-dehydroshikimate + NADH + H(+). It participates in metabolic intermediate biosynthesis; chorismate biosynthesis; chorismate from D-erythrose 4-phosphate and phosphoenolpyruvate: step 4/7. Its function is as follows. The actual biological function of YdiB remains unclear, nor is it known whether 3-dehydroshikimate or quinate represents the natural substrate. Catalyzes the reversible NAD-dependent reduction of both 3-dehydroshikimate (DHSA) and 3-dehydroquinate to yield shikimate (SA) and quinate, respectively. It can use both NAD or NADP for catalysis, however it has higher catalytic efficiency with NAD. The sequence is that of Quinate/shikimate dehydrogenase from Escherichia coli O81 (strain ED1a).